The chain runs to 661 residues: UvrABC system protein B (661 aa).

One can recognise a Helicase ATP-binding domain in the interval 25–182 (AGLSSKKRSQ…NDLINLQYER (158 aa)). An ATP-binding site is contributed by 38–45 (GITGSGKT). A Beta-hairpin motif is present at residues 91–114 (YYDYYQPEAYIARTDTFIEKDSSI). The Helicase C-terminal domain maps to 430–592 (QVEDLISEIQ…IIPKTINRAI (163 aa)). Positions 621–656 (KTHIDKLKKEMLKAASNLEFEQAVKLRDQLKTLEAA) constitute a UVR domain.

Belongs to the UvrB family. As to quaternary structure, forms a heterotetramer with UvrA during the search for lesions. Interacts with UvrC in an incision complex.

Its subcellular location is the cytoplasm. In terms of biological role, the UvrABC repair system catalyzes the recognition and processing of DNA lesions. A damage recognition complex composed of 2 UvrA and 2 UvrB subunits scans DNA for abnormalities. Upon binding of the UvrA(2)B(2) complex to a putative damaged site, the DNA wraps around one UvrB monomer. DNA wrap is dependent on ATP binding by UvrB and probably causes local melting of the DNA helix, facilitating insertion of UvrB beta-hairpin between the DNA strands. Then UvrB probes one DNA strand for the presence of a lesion. If a lesion is found the UvrA subunits dissociate and the UvrB-DNA preincision complex is formed. This complex is subsequently bound by UvrC and the second UvrB is released. If no lesion is found, the DNA wraps around the other UvrB subunit that will check the other stand for damage. This Rickettsia peacockii (strain Rustic) protein is UvrABC system protein B.